The chain runs to 173 residues: NADH-ubiquinone oxidoreductase chain 6 (173 aa).

The next 5 helical transmembrane spans lie at 1–21 (MTYF…AVAS), 27–47 (YGVV…VNLG), 48–68 (VSFV…VVFV), 87–107 (VMGY…LGGF), and 139–159 (YGVG…FVVL).

It belongs to the complex I subunit 6 family.

Its subcellular location is the mitochondrion membrane. It carries out the reaction a ubiquinone + NADH + 5 H(+)(in) = a ubiquinol + NAD(+) + 4 H(+)(out). Its function is as follows. Core subunit of the mitochondrial membrane respiratory chain NADH dehydrogenase (Complex I) that is believed to belong to the minimal assembly required for catalysis. Complex I functions in the transfer of electrons from NADH to the respiratory chain. The immediate electron acceptor for the enzyme is believed to be ubiquinone. The chain is NADH-ubiquinone oxidoreductase chain 6 (MT-ND6) from Coturnix japonica (Japanese quail).